The chain runs to 447 residues: Tektin-4 (447 aa).

Coiled-coil stretches lie at residues 114-143, 324-348, and 375-423; these read KSEL…RALD, KILS…DKEA, and FRLM…TNSL.

The protein belongs to the tektin family. As to quaternary structure, microtubule inner protein component of sperm flagellar doublet microtubules. In terms of processing, ubiquitinated, leading to its degradation. Deubiquitinated by USP16, promoting its stability.

It is found in the cytoplasm. Its subcellular location is the cytoskeleton. The protein resides in the cilium axoneme. It localises to the flagellum axoneme. Functionally, microtubule inner protein (MIP) part of the dynein-decorated doublet microtubules (DMTs) in cilia and flagellar axoneme. Forms filamentous polymers in the walls of ciliary and flagellar microtubules. Contributes to normal sperm motility. The chain is Tektin-4 (Tekt4) from Rattus norvegicus (Rat).